The primary structure comprises 341 residues: Myb-related transcription factor, partner of profilin (341 aa).

In terms of domain architecture, Myb-like spans 8-80 (VTRLRKPRFS…EVQKRWNDFK (73 aa)). Disordered regions lie at residues 84 to 103 (KEKL…EEAM), 180 to 210 (LPHL…PSGV), and 309 to 341 (AEPP…WKNL). Residues 184–200 (TPSPDPSECPSPPPPGS) are compositionally biased toward pro residues. The span at 321–341 (NKRKRFGYLSQRKRRGRWKNL) shows a compositional bias: basic residues.

The protein resides in the nucleus. Functionally, transcriptional repressor; DNA-binding protein that specifically recognizes the core sequence 5'-YAAC[GT]G-3'. This chain is Myb-related transcription factor, partner of profilin (mypop), found in Xenopus laevis (African clawed frog).